A 140-amino-acid chain; its full sequence is UPF0251 protein Athe_2281 (140 aa).

It belongs to the UPF0251 family.

The chain is UPF0251 protein Athe_2281 from Caldicellulosiruptor bescii (strain ATCC BAA-1888 / DSM 6725 / KCTC 15123 / Z-1320) (Anaerocellum thermophilum).